A 366-amino-acid chain; its full sequence is Peptide chain release factor 2 (366 aa).

Position 251 is an N5-methylglutamine (Q251).

Belongs to the prokaryotic/mitochondrial release factor family. In terms of processing, methylated by PrmC. Methylation increases the termination efficiency of RF2.

The protein localises to the cytoplasm. Its function is as follows. Peptide chain release factor 2 directs the termination of translation in response to the peptide chain termination codons UGA and UAA. The protein is Peptide chain release factor 2 (prfB) of Listeria monocytogenes serovar 1/2a (strain ATCC BAA-679 / EGD-e).